Consider the following 179-residue polypeptide: RNA polymerase sigma-E factor (179 aa).

A Polymerase core binding motif is present at residues 36–49 (DLLQTALVRTYGRW). The H-T-H motif DNA-binding region spans 130-149 (TEETAAALGMSAGTVKSTLH).

This sequence belongs to the sigma-70 factor family. ECF subfamily.

The protein resides in the cytoplasm. Functionally, sigma factors are initiation factors that promote the attachment of RNA polymerase to specific initiation sites and are then released. This sigma factor is required for normal cell wall integrity; it is recruited by RNA polymerase to transcribe genes with cell wall-related functions. This chain is RNA polymerase sigma-E factor (sigE), found in Streptomyces avermitilis (strain ATCC 31267 / DSM 46492 / JCM 5070 / NBRC 14893 / NCIMB 12804 / NRRL 8165 / MA-4680).